Reading from the N-terminus, the 398-residue chain is Protochlorophyllide reductase, chloroplastic (398 aa).

The transit peptide at Met1–Gln64 directs the protein to the chloroplast.

It belongs to the short-chain dehydrogenases/reductases (SDR) family. POR subfamily.

It is found in the plastid. The protein resides in the chloroplast. It catalyses the reaction chlorophyllide a + NADP(+) = protochlorophyllide a + NADPH + H(+). Its pathway is porphyrin-containing compound metabolism; chlorophyll biosynthesis. Functionally, phototransformation of protochlorophyllide (Pchlide) to chlorophyllide (Chlide). This chain is Protochlorophyllide reductase, chloroplastic (PORA), found in Cucumis sativus (Cucumber).